A 639-amino-acid polypeptide reads, in one-letter code: Eukaryotic translation initiation factor 2-alpha kinase 2 (639 aa).

In terms of domain architecture, Protein kinase spans 171-588 (FEEYSLLGRG…LEVLNCGLLL (418 aa)). Residues 177-185 (LGRGGFGSV) and Lys-200 each bind ATP. Over residues 298-320 (ISTSRKSSYSSTTESSNFENLES) the composition is skewed to low complexity. Positions 298 to 322 (ISTSRKSSYSSTTESSNFENLESPR) are disordered. Asp-417 functions as the Proton acceptor in the catalytic mechanism.

The protein belongs to the protein kinase superfamily. Ser/Thr protein kinase family. GCN2 subfamily. Autophosphorylated.

It carries out the reaction L-seryl-[protein] + ATP = O-phospho-L-seryl-[protein] + ADP + H(+). It catalyses the reaction L-threonyl-[protein] + ATP = O-phospho-L-threonyl-[protein] + ADP + H(+). Functionally, mediates down-regulation of protein synthesis in response to stress conditions by the phosphorylation of the alpha subunit of eIF-2 (tif211) on 'Ser-52'. Protein synthesis is inhibited at the level of initiation. Activity is inhibited in the presence of heme. The chain is Eukaryotic translation initiation factor 2-alpha kinase 2 (hri2) from Schizosaccharomyces pombe (strain 972 / ATCC 24843) (Fission yeast).